A 72-amino-acid polypeptide reads, in one-letter code: Conotoxin VnMKLT2-011 (72 aa).

A signal peptide spans 1 to 23 (MMKLTCVLIIAVLFLTACQLTTA). Positions 24–42 (ETRDEYRAVRSSDEVRNSR) are excised as a propeptide. 3 disulfide bridges follow: C44–C57, C51–C62, and C56–C71.

The protein belongs to the conotoxin O1 superfamily. In terms of tissue distribution, expressed by the venom duct.

It is found in the secreted. This chain is Conotoxin VnMKLT2-011, found in Conus ventricosus (Mediterranean cone).